A 465-amino-acid polypeptide reads, in one-letter code: Argininosuccinate lyase (465 aa).

The protein belongs to the lyase 1 family. Argininosuccinate lyase subfamily.

The protein localises to the cytoplasm. It catalyses the reaction 2-(N(omega)-L-arginino)succinate = fumarate + L-arginine. It functions in the pathway amino-acid biosynthesis; L-arginine biosynthesis; L-arginine from L-ornithine and carbamoyl phosphate: step 3/3. The sequence is that of Argininosuccinate lyase from Methylococcus capsulatus (strain ATCC 33009 / NCIMB 11132 / Bath).